A 63-amino-acid chain; its full sequence is Large ribosomal subunit protein bL32c (63 aa).

Residues 38–63 (RSFSGVSEHPKPKGFSRQQTNNRVLG) form a disordered region. Positions 53–63 (SRQQTNNRVLG) are enriched in polar residues.

It belongs to the bacterial ribosomal protein bL32 family.

Its subcellular location is the plastid. It is found in the chloroplast. The protein is Large ribosomal subunit protein bL32c (rpl32) of Oryza sativa (Rice).